The sequence spans 316 residues: Olfactory receptor 1165 (316 aa).

Topologically, residues 1–28 (MMLDLGNESSVTMFILSGFSEYPHLHAP) are extracellular. A glycan (N-linked (GlcNAc...) asparagine) is linked at N7. The helical transmembrane segment at 29 to 50 (LFLLFFMIYTVTLIGNLGIIVV) threads the bilayer. The Cytoplasmic segment spans residues 51–61 (RKVNPKLHTPM). Residues 62–80 (YFFLSHLSFLDICYSSVFT) form a helical membrane-spanning segment. Residues 81–99 (PKLLEILIVEDRTISFKGC) are Extracellular-facing. The cysteines at positions 99 and 181 are disulfide-linked. A helical membrane pass occupies residues 100–122 (MTQFFLICAFVITEMFMLAVMAY). Over 123-141 (DRFVAVCNPLLYTVSMSPK) the chain is Cytoplasmic. The chain crosses the membrane as a helical span at residues 142–166 (LCAFLVAGTYMWGVLCSLTITYSLL). Over 167-205 (QLSYCGPNIINHFGCEYSAILSLSCSDPTFSQVVCLTIS) the chain is Extracellular. The helical transmembrane segment at 206–228 (IFNETCSLLIILASYVFIVVTII) threads the bilayer. Residues 229 to 239 (KMPSKGGLQKA) lie on the Cytoplasmic side of the membrane. The chain crosses the membrane as a helical span at residues 240–263 (FSTCSSHLTAISIFHGIILLLYCV). The Extracellular portion of the chain corresponds to 264–268 (PNSKN). A helical transmembrane segment spans residues 269-291 (SWLVVKVATVLFTVMIPMLNPLI). Residues 292 to 316 (YSLRNKDVKGTVSRLMHLKLQAHST) are Cytoplasmic-facing.

It belongs to the G-protein coupled receptor 1 family.

The protein resides in the cell membrane. Olfactory receptor. The polypeptide is Olfactory receptor 1165 (Mus musculus (Mouse)).